Consider the following 285-residue polypeptide: 2-hydroxy-6-oxononadienedioate/2-hydroxy-6-oxononatrienedioate hydrolase 1 (285 aa).

The Proton acceptor role is filled by H265.

Belongs to the AB hydrolase superfamily. MhpC family. Homodimer.

The enzyme catalyses (2Z,4E)-2-hydroxy-6-oxonona-2,4-dienedioate + H2O = (2Z)-2-hydroxypenta-2,4-dienoate + succinate + H(+). It catalyses the reaction (2Z,4E,7E)-2-hydroxy-6-oxonona-2,4,7-trienedioate + H2O = (2Z)-2-hydroxypenta-2,4-dienoate + fumarate + H(+). Its pathway is aromatic compound metabolism; 3-phenylpropanoate degradation. Functionally, catalyzes the cleavage of the C5-C6 bond of 2-hydroxy-6-oxononadienedioate and 2-hydroxy-6-oxononatrienedioate, a dienol ring fission product of the bacterial meta-cleavage pathway for degradation of phenylpropionic acid. The chain is 2-hydroxy-6-oxononadienedioate/2-hydroxy-6-oxononatrienedioate hydrolase 1 from Pseudomonas putida (Arthrobacter siderocapsulatus).